We begin with the raw amino-acid sequence, 291 residues long: Kidney mitochondrial carrier protein 1 (291 aa).

3 Solcar repeats span residues 7 to 96, 104 to 189, and 198 to 289; these read KPFI…LKRL, ETLV…TKKH, and DTVY…LKKL. 6 helical membrane-spanning segments follow: residues 9–26, 71–89, 106–124, 164–183, 204–224, and 264–283; these read FIYGGLASITAECGTFPI, GIAPAMLRQASYGTIKIGT, LVLNAFCGVLSGVVSSCIA, GVSLTAQRAAIVVGVELPVY, FLSSFTCGLAGALASNPVDVV, and GFWPNWLRLGPWNIIFFITY.

The protein belongs to the mitochondrial carrier (TC 2.A.29) family.

Its subcellular location is the mitochondrion inner membrane. The enzyme catalyses sulfite(in) + sulfate(out) = sulfite(out) + sulfate(in). It catalyses the reaction thiosulfate(in) + sulfate(out) = thiosulfate(out) + sulfate(in). The catalysed reaction is sulfate(out) + phosphate(in) = sulfate(in) + phosphate(out). It carries out the reaction oxalate(in) + sulfate(out) = oxalate(out) + sulfate(in). The enzyme catalyses malonate(in) + sulfate(out) = malonate(out) + sulfate(in). It catalyses the reaction maleate(in) + sulfate(out) = maleate(out) + sulfate(in). The catalysed reaction is (S)-malate(in) + sulfate(out) = (S)-malate(out) + sulfate(in). It carries out the reaction (3S)-citramalate(in) + sulfate(out) = (3S)-citramalate(out) + sulfate(in). The enzyme catalyses (3R)-citramalate(in) + sulfate(out) = (3R)-citramalate(out) + sulfate(in). It catalyses the reaction sulfate(out) + succinate(in) = sulfate(in) + succinate(out). The catalysed reaction is (S,S)-tartrate(in) + sulfate(out) = (S,S)-tartrate(out) + sulfate(in). It carries out the reaction (2R,3R)-tartrate(in) + sulfate(out) = (2R,3R)-tartrate(out) + sulfate(in). The enzyme catalyses D-aspartate(in) + sulfate(out) = D-aspartate(out) + sulfate(in). It catalyses the reaction L-aspartate(in) + sulfate(out) = L-aspartate(out) + sulfate(in). The catalysed reaction is sulfate(in) = sulfate(out). It carries out the reaction phosphate(in) = phosphate(out). The enzyme catalyses (S)-malate(out) = (S)-malate(in). Its function is as follows. Probable transporter. Antiporter that transports inorganic anions (sulfate, sulfite, thiosulfate and phosphate) and, to a lesser extent, a variety of dicarboxylates (e.g. malonate, malate and citramalate) and, even more so, aspartate. The sulfate/sulfate exchange is much higher than the phosphate/phosphate and malate/malate exchanges. The transport affinities is higher for sulfate and thiosulfate than for any other substrate. May catalyze the export of sulfite and thiosulfate (the hydrogen sulfide degradation products) from the mitochondria, thereby modulating the level of the hydrogen sulfide. Also may mediate a very low unidirectional transport of sulfate, phosphate and (S)-malate. In Xenopus laevis (African clawed frog), this protein is Kidney mitochondrial carrier protein 1.